We begin with the raw amino-acid sequence, 307 residues long: MTSAQNESQALGDLAARQLANATKTVPQLSTITPRWLLHLLNWVPVEAGIYRVNRVVNPEQVAIKAEAGAGSEEPVPQTYVDYETSPREYTLRSISTLVDIHTRVSDLYSSPHDQIAQQLRLTIETIKERQELELINSPEYGLLAQATGRQTIQTLAGAPTPDDLDALITKVWKTPSFFLTHPLGIAAFGREATYRGVPPPVVSLFGPTQFITWHGIRLPSDKVPVEDGKTKFILVRTGEERQGVVGLFQPGLVGEQAPGLSVRFTGINQSAIATYLVTLYTSLAVLTDDALAVLDDVAVDQFHEYK.

The protein belongs to the encapsulin family. Family 2A subfamily. Homooligomeric. The encapsulin nanocompartment is formed by 60 subunits; monomers form pentamers which assemble to form shells. There are 12 charged pores where the pentamers meet as well as 3-fold axis channels and dimer channels.

Its subcellular location is the encapsulin nanocompartment. Shell component of a type 2A encapsulin nanocompartment. Forms encapsulin nanocompartments about 24 nm in diameter from 60 monomers. Probably encapsulates at least cysteine desulfurase (CyD) and allows passage of cysteine into its interior, probably involved in sulfur metabolism. The protein is Type 2A encapsulin shell protein of Mycobacterium avium.